We begin with the raw amino-acid sequence, 647 residues long: MKKEEYLEKVALANLWMRAYYEKDEPLASDEEYDVLIRELRVFEEQNKDEISKDSPTQKIAPTIQSEFKKIAHLKRMWSMEDVFDESELRAWAKRAKCEKNFFIEPKFDGASLNLLYENGKLVSGATRGDGEVGEDITLNVFEIENIPKNIAYKERIEIRGEVVILKDDFEKINEKRALLNQSLFANPRNAASGSLRQLDTSITKERNLKFYPWGVGENTLNFTKHSEVMQFIRELGFLKDDFIKLCANLDEVLKAYDELLALREKKPMMMDGMVVRIDDLALCEELGYTVKFPKFMAAFKFPALEKTTRLIGVNLQVGRSGVITPVAVLEPVNLDGVVVKSATLHNFDEIARLDVKINDFVSVIRSGDVIPKITKVFKDRREGLEMEISRPKLCPTCQSELLDEGTLIKCQNIDCEDRLVNSIIHFVSKKCLNIDGLGENIVELLYKHKKITTLESIFHLKFSDFEGLEGFKEKKINNLLNAIEQARECELFRFITALGIEHIGEVAAKKLSLSFGKEWHKQSFEAYANLEGFGEQMALSLCEFTRVNHVRIDEFYKLLNLKIEKLEIKSDGVIFGKTFVITGTLSRPRDEFKALIEKLGGKVSSSVSKKTDYVLFGEEAGSKLIKAKELEVKCIDESAFNELVKE.

NAD(+) contacts are provided by residues 30–34 (DEEYD), 79–80 (SM), and E105. The active-site N6-AMP-lysine intermediate is K107. Residues R128, E162, and K301 each contribute to the NAD(+) site. Residues C395, C398, C411, and C416 each coordinate Zn(2+). The 78-residue stretch at 570-647 (KSDGVIFGKT…ESAFNELVKE (78 aa)) folds into the BRCT domain.

This sequence belongs to the NAD-dependent DNA ligase family. LigA subfamily. It depends on Mg(2+) as a cofactor. Mn(2+) serves as cofactor.

It catalyses the reaction NAD(+) + (deoxyribonucleotide)n-3'-hydroxyl + 5'-phospho-(deoxyribonucleotide)m = (deoxyribonucleotide)n+m + AMP + beta-nicotinamide D-nucleotide.. DNA ligase that catalyzes the formation of phosphodiester linkages between 5'-phosphoryl and 3'-hydroxyl groups in double-stranded DNA using NAD as a coenzyme and as the energy source for the reaction. It is essential for DNA replication and repair of damaged DNA. This Campylobacter jejuni subsp. jejuni serotype O:23/36 (strain 81-176) protein is DNA ligase.